We begin with the raw amino-acid sequence, 233 residues long: Large ribosomal subunit protein uL1 (233 aa).

The protein belongs to the universal ribosomal protein uL1 family. Part of the 50S ribosomal subunit.

Its function is as follows. Binds directly to 23S rRNA. The L1 stalk is quite mobile in the ribosome, and is involved in E site tRNA release. In terms of biological role, protein L1 is also a translational repressor protein, it controls the translation of the L11 operon by binding to its mRNA. In Zymomonas mobilis subsp. mobilis (strain ATCC 31821 / ZM4 / CP4), this protein is Large ribosomal subunit protein uL1.